Consider the following 121-residue polypeptide: Large ribosomal subunit protein bL19 (121 aa).

This sequence belongs to the bacterial ribosomal protein bL19 family.

In terms of biological role, this protein is located at the 30S-50S ribosomal subunit interface and may play a role in the structure and function of the aminoacyl-tRNA binding site. This Mesomycoplasma hyopneumoniae (strain 232) (Mycoplasma hyopneumoniae) protein is Large ribosomal subunit protein bL19.